The sequence spans 580 residues: MSATAFPTLSTPAGEIPATAPAWNRQRRSQMPSHRYRDVHSRVAVPLTDRQWPTRRLTEAPLWVPVDLRDGNQALAEPMDPARKRRFFELLVAMGYKEIEVGYPSASQTDFDFVRLLADTDLAPDDVTVVVFTPARRDLIERTVESIRGITNPVVVHMYTATAPTWREVVLGHDRAALRALILDGGREVLRCAGDLPTVRFEFSPEVFNLTEPDFVLEICDAMTELWQATPQRPVILNLPATVEVATPNVYADQIEYMHRNLARRDSVILSVHPHNDRGTGIACAELAVLAGAQRVEGCVFGNGERTGNVDIATLALNLHAQGVDPMIDFSDIDEIRRTVEYCNRVEIHARHPYVGDLVHTAFSGTHQDAIKKGLAEHRARAAARGVPEREIDWRVPYLPIDPADIGRSYDAVIRVNSQSGKGGIAYLLESEYGTVLPRRLQIDFARHVQQHTDDTGREVTAAELWSLFSAVYLREGEADAPQADLGNRLGIDGVVASGASAAELGAALRRHGVELEVLAVHHTTVTGELLALVEYRDGAGVRWSAGRGRTAGEAVGNAVAAAVGPATAPARAVAEVRPG.

Polar residues predominate over residues 1 to 11 (MSATAFPTLST). Positions 1-37 (MSATAFPTLSTPAGEIPATAPAWNRQRRSQMPSHRYR) are disordered. Positions 61 to 334 (PLWVPVDLRD…DPMIDFSDID (274 aa)) constitute a Pyruvate carboxyltransferase domain. Mg(2+) contacts are provided by D70, H273, H275, and N309. Residues 476–580 (EGEADAPQAD…ARAVAEVRPG (105 aa)) are regulatory domain.

This sequence belongs to the alpha-IPM synthase/homocitrate synthase family. LeuA type 2 subfamily. As to quaternary structure, homodimer. Requires Mg(2+) as cofactor.

It is found in the cytoplasm. It catalyses the reaction 3-methyl-2-oxobutanoate + acetyl-CoA + H2O = (2S)-2-isopropylmalate + CoA + H(+). Its pathway is amino-acid biosynthesis; L-leucine biosynthesis; L-leucine from 3-methyl-2-oxobutanoate: step 1/4. Catalyzes the condensation of the acetyl group of acetyl-CoA with 3-methyl-2-oxobutanoate (2-ketoisovalerate) to form 3-carboxy-3-hydroxy-4-methylpentanoate (2-isopropylmalate). This Nocardia farcinica (strain IFM 10152) protein is 2-isopropylmalate synthase.